The following is a 416-amino-acid chain: Vacuole membrane protein KMS1 (416 aa).

G2 bears the N-acetylglycine mark. Residues 2–60 (GSAGVASSSSDVAISALREKHEKEVENLTLTTQPLNTLKLFVEATIQYIKRSISYLLAH) lie on the Cytoplasmic side of the membrane. A helical transmembrane segment spans residues 61 to 81 (GGWFILITTLLVVSGGLLVTV). At 82-101 (DGPHGKHVEEVLEYVRYGLW) the chain is on the lumenal side. A helical membrane pass occupies residues 102–124 (WIALGVASSIGLGSGLHTFVLYL). Residues 125-257 (GPHIALFTLK…WLLTHSQHLN (133 aa)) are Cytoplasmic-facing. The helical transmembrane segment at 258–278 (FFTVLVLASVPNPLFDLAGIM) threads the bilayer. At 279 to 289 (CGQFGIPFWEF) the chain is on the lumenal side. The helical transmembrane segment at 290–312 (FLATLIGKAIIKTHIQTIFIICV) threads the bilayer. Residues 313 to 323 (CNNQLLDWMEN) lie on the Cytoplasmic side of the membrane. Residues 324–344 (ELIWILSHVPGLASMLPGLTA) traverse the membrane as a helical segment. The Lumenal segment spans residues 345-372 (KLHAMKEKYIDAPSPVPSHIKVKKWDFS). Residues 373–393 (FASIWNGIVWLMLLNFFVKIV) form a helical membrane-spanning segment. Topologically, residues 394-416 (TATAQRHLKKKQEKEMATLTHSD) are cytoplasmic.

It belongs to the VMP1 family.

The protein resides in the endoplasmic reticulum membrane. Involved in the early secretory pathway. Required for the correct export of secretory products from the endoplasmic reticulum (ER) and involved in the maintenance of ER integrity. This is Vacuole membrane protein KMS1 from Arabidopsis thaliana (Mouse-ear cress).